We begin with the raw amino-acid sequence, 29 residues long: uncharacterized protein (29 aa).

The chain crosses the membrane as a helical span at residues 7–27 (FSLVTTIIVLGLIVAVGLTAA).

It is found in the cell inner membrane. This is an uncharacterized protein from Escherichia coli O6:K15:H31 (strain 536 / UPEC).